Consider the following 180-residue polypeptide: Inner membrane-spanning protein YciB (180 aa).

5 helical membrane-spanning segments follow: residues 11–31 (ILFF…ALII), 52–72 (IIMG…NKVE), 76–96 (WKVT…QYGF), 121–141 (LAWA…SQYC), and 149–169 (FKSF…GIYV).

This sequence belongs to the YciB family.

It is found in the cell inner membrane. Functionally, plays a role in cell envelope biogenesis, maintenance of cell envelope integrity and membrane homeostasis. This is Inner membrane-spanning protein YciB from Mannheimia succiniciproducens (strain KCTC 0769BP / MBEL55E).